The sequence spans 379 residues: MSLSRHALQDAAQRFGTPLYLYDAEELDAALWRVQRAFGDARIFYAMKANPNLNLLRRYAAAGVGFECVSLGELLRAEAAGAGGERMILNGPAKSDAEYAAAARLGATIVVDREEEVVLLPPGSRVLVRVNPAMTVSTHEHLATGTARSKFGLTPEQVPGTLAELRDAGHEVLGLHMHIGSAIEQAEDFTAAFARVTELRAHIGGLSVLNVGGGWSLNADLEGIAYEAHEAARVFGAELWVEPGRYLVASAGWLLTRVVGTKRTGRNFCLVDAGMTEFLRPMLYGASHPLYPMWDALATEVWDVAGPACESGDLIARGVPLPTPQRGHLLLIGEAGAYGASMSSTYLSRPRPAEVLWTGHDWQLLRRRETPQDIWAAEV.

The residue at position 48 (K48) is an N6-(pyridoxal phosphate)lysine. Pyridoxal 5'-phosphate-binding positions include G214 and 242 to 245 (EPGR). Positions 245, 280, and 284 each coordinate substrate. The active-site Proton donor is the C309. E310 and Y338 together coordinate substrate. Position 338 (Y338) interacts with pyridoxal 5'-phosphate.

It belongs to the Orn/Lys/Arg decarboxylase class-II family. LysA subfamily. In terms of assembly, homodimer. The cofactor is pyridoxal 5'-phosphate.

It catalyses the reaction meso-2,6-diaminopimelate + H(+) = L-lysine + CO2. It participates in amino-acid biosynthesis; L-lysine biosynthesis via DAP pathway; L-lysine from DL-2,6-diaminopimelate: step 1/1. Its function is as follows. Specifically catalyzes the decarboxylation of meso-diaminopimelate (meso-DAP) to L-lysine. The polypeptide is Diaminopimelate decarboxylase (Deinococcus radiodurans (strain ATCC 13939 / DSM 20539 / JCM 16871 / CCUG 27074 / LMG 4051 / NBRC 15346 / NCIMB 9279 / VKM B-1422 / R1)).